Reading from the N-terminus, the 208-residue chain is Cysteine-rich protein 2 (208 aa).

The region spanning 5 to 57 (CPKCDKTVYFAEKVSSLGKDWHRFCLRCEHCSKTLTPGGHAEHDGKPFCHKPC) is the LIM zinc-binding 1 domain. Residue Lys23 is modified to N6-acetyllysine. The tract at residues 98-117 (TEERKASGPPKGPSKASSVT) is disordered. A Phosphoserine modification is found at Ser104. The segment covering 104–115 (SGPPKGPSKASS) has biased composition (low complexity). An LIM zinc-binding 2 domain is found at 126 to 178 (CPRCNKRVYFAEKVTSLGKDWHRPCLRCERCGKTLTPGGHAEHDGQPYCHKPC). Residues Lys138 and Lys144 each carry the N6-acetyllysine modification.

Interacts with TGFB1I1.

The protein is Cysteine-rich protein 2 (CRIP2) of Bos taurus (Bovine).